We begin with the raw amino-acid sequence, 467 residues long: F-box only protein 6 (467 aa).

The 50-residue stretch at 114–163 folds into the F-box domain; that stretch reads QEIWQEFPQDLFEDVVSRLPMATFFQFRAVCRKWNALIDSDSFSRCFTEL. 3 Kelch repeats span residues 163-211, 252-305, and 406-456; these read LPQT…MASA, GMTL…NFKS, and CLGN…IACG.

This chain is F-box only protein 6 (FBX6), found in Arabidopsis thaliana (Mouse-ear cress).